The primary structure comprises 459 residues: Zinc finger protein ZPR1 (459 aa).

Positions 1–29 (MSAGGAVEPGLPAAAAAPSAAPARDPGPG) are enriched in low complexity. Residues 1–43 (MSAGGAVEPGLPAAAAAPSAAPARDPGPGHLFRPISAEDEEQQ) form a disordered region. 2 C4-type zinc fingers span residues 51–83 (CMNC…CEHC) and 259–291 (CPEC…CENC). The tract at residues 438 to 459 (NEELGLNDMKTEGYETGLPAQR) is disordered.

It belongs to the ZPR1 family. Component of an import snRNP complex composed of KPNB1, SNUPN, SMN1 and ZNF259. Interacts (via C-terminal region) with SMN1 (via C-terminal region); the interaction occurs after treatment with serum. Interacts with elongation factor 1-alpha EEF1A1; the interaction occurs in a epidermal growth factor (EGF)-dependent manner. Interacts (via zinc fingers) with EGFR (via C-terminal cytoplasmic kinase domain); the interaction is negatively regulated in response to epidermal growth factor (EGF) stimulation and EGFR kinase activity. May also bind to the PDGFR receptor.

Its subcellular location is the nucleus. The protein resides in the cytoplasm. It is found in the nucleolus. The protein localises to the perinuclear region. It localises to the gem. Its subcellular location is the cajal body. The protein resides in the cell projection. It is found in the axon. The protein localises to the growth cone. In terms of biological role, acts as a signaling molecule that communicates proliferative growth signals from the cytoplasm to the nucleus. Plays a role for the localization and accumulation of the survival motor neuron protein SMN1 in sub-nuclear bodies, including gems and Cajal bodies. Induces neuron differentiation and stimulates axonal growth and formation of growth cone in spinal cord motor neurons. Plays a role in the splicing of cellular pre-mRNAs. May be involved in H(2)O(2)-induced neuronal cell death. The chain is Zinc finger protein ZPR1 (ZNF259) from Bos taurus (Bovine).